The sequence spans 360 residues: MTATLERRESASLWERFCTWITSTENRLYIGWFGVLMIPTLLTATSVFIIAFVAAPPVDIDGIREPVAGSLLYGNNIISGAIIPSSAAIGIHFYPIWEAASLDEWLYNGGPYQLIVLHFLLGVSCYIGREWELSYRLGMRPWISVAFTAPVAAAAAVFLVYPIGQGSFSDGMPLGISGTFNFMLVFQAEHNILMHPFHQLGVAGVFGGSLFSAMHGSLVTSSLIRETTENESANNGYKFGQEEETYNIVAAHGYFGRLIFQYASFNNSRSLHFFLGLWPVVGIWFTAMSVSTMAFNLNGFNFNQSVVDSQGRVINTWADILNRANLGMEVMHERNAHNFPLDLASSNSLPVSLVAPSVNG.

The next 3 membrane-spanning stretches (helical) occupy residues 29–46, 118–133, and 142–156; these read YIGWFGVLMIPTLLTATS, HFLLGVSCYIGREWEL, and WISVAFTAPVAAAAA. Residue histidine 118 participates in chlorophyll a binding. A pheophytin a-binding site is contributed by tyrosine 126. [CaMn4O5] cluster is bound by residues aspartate 170 and glutamate 189. A helical transmembrane segment spans residues 197–218; the sequence is FHQLGVAGVFGGSLFSAMHGSL. Histidine 198 provides a ligand contact to chlorophyll a. Residues histidine 215 and 264–265 contribute to the a quinone site; that span reads SF. Residue histidine 215 participates in Fe cation binding. Histidine 272 serves as a coordination point for Fe cation. A helical transmembrane segment spans residues 274 to 288; that stretch reads FLGLWPVVGIWFTAM. Residues histidine 332, glutamate 333, aspartate 342, and alanine 344 each contribute to the [CaMn4O5] cluster site. Positions 345–360 are excised as a propeptide; it reads SSNSLPVSLVAPSVNG.

This sequence belongs to the reaction center PufL/M/PsbA/D family. PSII is composed of 1 copy each of membrane proteins PsbA, PsbB, PsbC, PsbD, PsbE, PsbF, PsbH, PsbI, PsbJ, PsbK, PsbL, PsbM, PsbT, PsbX, PsbY, PsbZ, Psb30/Ycf12, at least 3 peripheral proteins of the oxygen-evolving complex and a large number of cofactors. It forms dimeric complexes. The D1/D2 heterodimer binds P680, chlorophylls that are the primary electron donor of PSII, and subsequent electron acceptors. It shares a non-heme iron and each subunit binds pheophytin, quinone, additional chlorophylls, carotenoids and lipids. D1 provides most of the ligands for the Mn4-Ca-O5 cluster of the oxygen-evolving complex (OEC). There is also a Cl(-1) ion associated with D1 and D2, which is required for oxygen evolution. The PSII complex binds additional chlorophylls, carotenoids and specific lipids. is required as a cofactor. Post-translationally, tyr-161 forms a radical intermediate that is referred to as redox-active TyrZ, YZ or Y-Z. In terms of processing, C-terminally processed by CTPA; processing is essential to allow assembly of the oxygen-evolving complex and thus photosynthetic growth.

The protein localises to the plastid. It localises to the chloroplast thylakoid membrane. It carries out the reaction 2 a plastoquinone + 4 hnu + 2 H2O = 2 a plastoquinol + O2. Photosystem II (PSII) is a light-driven water:plastoquinone oxidoreductase that uses light energy to abstract electrons from H(2)O, generating O(2) and a proton gradient subsequently used for ATP formation. It consists of a core antenna complex that captures photons, and an electron transfer chain that converts photonic excitation into a charge separation. The D1/D2 (PsbA/PsbD) reaction center heterodimer binds P680, the primary electron donor of PSII as well as several subsequent electron acceptors. The chain is Photosystem II protein D1 from Gracilaria tenuistipitata var. liui (Red alga).